The following is an 823-amino-acid chain: Polyadenylation and cleavage factor homolog 11 (823 aa).

In terms of domain architecture, CID spans 3 to 135 (SVESAARDYR…ELDMKINKLD (133 aa)). Disordered regions lie at residues 142–176 (NPQT…STST), 188–301 (SSTP…KTLK), 340–395 (SSAP…LPAP), 570–643 (LPAP…EKRS), and 728–755 (WLTP…VASS). Polar residues-rich tracts occupy residues 157-176 (APSQ…STST) and 188-198 (SSTPGAASASK). The segment covering 200-226 (VVEKTKSPGTVNKEKQVKKEPKQDPLD) has biased composition (basic and acidic residues). Low complexity-rich tracts occupy residues 227–242 (KLLP…SSPA) and 342–353 (APPFQHPQQHHP). Pro residues predominate over residues 374–390 (PQDPAPIVPVQAPPPQQ). Residues 571-581 (PAPARSPSSPR) are compositionally biased toward low complexity. Positions 609-624 (QPQQNARWGGANKQQN) are enriched in polar residues.

This is Polyadenylation and cleavage factor homolog 11 (pcf-11) from Caenorhabditis elegans.